The primary structure comprises 270 residues: Putative pyruvate, phosphate dikinase regulatory protein (270 aa).

151–158 (GVSRTSKT) contacts ADP.

Belongs to the pyruvate, phosphate/water dikinase regulatory protein family. PDRP subfamily.

The enzyme catalyses N(tele)-phospho-L-histidyl/L-threonyl-[pyruvate, phosphate dikinase] + ADP = N(tele)-phospho-L-histidyl/O-phospho-L-threonyl-[pyruvate, phosphate dikinase] + AMP + H(+). The catalysed reaction is N(tele)-phospho-L-histidyl/O-phospho-L-threonyl-[pyruvate, phosphate dikinase] + phosphate + H(+) = N(tele)-phospho-L-histidyl/L-threonyl-[pyruvate, phosphate dikinase] + diphosphate. Its function is as follows. Bifunctional serine/threonine kinase and phosphorylase involved in the regulation of the pyruvate, phosphate dikinase (PPDK) by catalyzing its phosphorylation/dephosphorylation. This is Putative pyruvate, phosphate dikinase regulatory protein from Streptococcus gordonii (strain Challis / ATCC 35105 / BCRC 15272 / CH1 / DL1 / V288).